The primary structure comprises 652 residues: DNA ligase (652 aa).

NAD(+)-binding positions include 29 to 33 (DSEYD), 78 to 79 (SL), and Glu-107. The active-site N6-AMP-lysine intermediate is Lys-109. The NAD(+) site is built by Arg-130, Glu-164, Lys-278, and Lys-302. Positions 395, 398, 413, and 418 each coordinate Zn(2+). The region spanning 577-652 (DQQAALFGLT…IEDEDWLLNL (76 aa)) is the BRCT domain.

It belongs to the NAD-dependent DNA ligase family. LigA subfamily. The cofactor is Mg(2+). Mn(2+) is required as a cofactor.

The catalysed reaction is NAD(+) + (deoxyribonucleotide)n-3'-hydroxyl + 5'-phospho-(deoxyribonucleotide)m = (deoxyribonucleotide)n+m + AMP + beta-nicotinamide D-nucleotide.. Its function is as follows. DNA ligase that catalyzes the formation of phosphodiester linkages between 5'-phosphoryl and 3'-hydroxyl groups in double-stranded DNA using NAD as a coenzyme and as the energy source for the reaction. It is essential for DNA replication and repair of damaged DNA. The chain is DNA ligase from Streptococcus equi subsp. equi (strain 4047).